A 367-amino-acid polypeptide reads, in one-letter code: DNA polymerase IV (367 aa).

Residues 14–198 form the UmuC domain; sequence IIHIDMDAFF…LPIEKFHGVG (185 aa). Asp18 and Asp116 together coordinate Mg(2+). The active site involves Glu117.

Belongs to the DNA polymerase type-Y family. Monomer. Mg(2+) serves as cofactor.

Its subcellular location is the cytoplasm. The enzyme catalyses DNA(n) + a 2'-deoxyribonucleoside 5'-triphosphate = DNA(n+1) + diphosphate. Its function is as follows. Poorly processive, error-prone DNA polymerase involved in untargeted mutagenesis. Copies undamaged DNA at stalled replication forks, which arise in vivo from mismatched or misaligned primer ends. These misaligned primers can be extended by PolIV. Exhibits no 3'-5' exonuclease (proofreading) activity. May be involved in translesional synthesis, in conjunction with the beta clamp from PolIII. The protein is DNA polymerase IV of Streptococcus thermophilus (strain CNRZ 1066).